The sequence spans 109 residues: Nucleoid-associated protein Psyc_0793 (109 aa).

Belongs to the YbaB/EbfC family. As to quaternary structure, homodimer.

Its subcellular location is the cytoplasm. The protein localises to the nucleoid. In terms of biological role, binds to DNA and alters its conformation. May be involved in regulation of gene expression, nucleoid organization and DNA protection. In Psychrobacter arcticus (strain DSM 17307 / VKM B-2377 / 273-4), this protein is Nucleoid-associated protein Psyc_0793.